A 401-amino-acid polypeptide reads, in one-letter code: tRNA(Met) cytidine acetate ligase (401 aa).

Residues 7–20 (IVEY…HLYH), glycine 101, asparagine 160, and 185–186 (RI) each bind ATP.

Belongs to the TmcAL family.

It localises to the cytoplasm. It catalyses the reaction cytidine(34) in elongator tRNA(Met) + acetate + ATP = N(4)-acetylcytidine(34) in elongator tRNA(Met) + AMP + diphosphate. Catalyzes the formation of N(4)-acetylcytidine (ac(4)C) at the wobble position of elongator tRNA(Met), using acetate and ATP as substrates. First activates an acetate ion to form acetyladenylate (Ac-AMP) and then transfers the acetyl group to tRNA to form ac(4)C34. The polypeptide is tRNA(Met) cytidine acetate ligase (Geobacillus sp. (strain WCH70)).